We begin with the raw amino-acid sequence, 130 residues long: Modulator protein MzrA (130 aa).

Over 1-15 the chain is Cytoplasmic; that stretch reads MIAAFIKRHAPQRRL. A helical membrane pass occupies residues 16-36; it reads SLWLALPVVALLALVMMPALF. Topologically, residues 37–130 are periplasmic; the sequence is RHDSALQIRA…RISFKPQSIG (94 aa).

The protein belongs to the MzrA family. As to quaternary structure, interacts with EnvZ.

It is found in the cell inner membrane. Functionally, modulates the activity of the EnvZ/OmpR two-component regulatory system, probably by directly modulating EnvZ enzymatic activity and increasing stability of phosphorylated OmpR. The sequence is that of Modulator protein MzrA from Erwinia tasmaniensis (strain DSM 17950 / CFBP 7177 / CIP 109463 / NCPPB 4357 / Et1/99).